Consider the following 143-residue polypeptide: Transcriptional regulator MraZ (143 aa).

2 SpoVT-AbrB domains span residues 5–47 (THSP…TTRE) and 76–119 (ANAE…DAGT).

It belongs to the MraZ family. In terms of assembly, forms oligomers.

It is found in the cytoplasm. The protein resides in the nucleoid. The sequence is that of Transcriptional regulator MraZ from Clavibacter michiganensis subsp. michiganensis (strain NCPPB 382).